An 83-amino-acid polypeptide reads, in one-letter code: Putative membrane protein insertion efficiency factor (83 aa).

Belongs to the UPF0161 family.

It is found in the cell inner membrane. Functionally, could be involved in insertion of integral membrane proteins into the membrane. This Pelagibacter ubique (strain HTCC1062) protein is Putative membrane protein insertion efficiency factor.